Consider the following 443-residue polypeptide: Putative F-box/FBD/LRR-repeat protein At3g49030 (443 aa).

One can recognise an F-box domain in the interval 20-68 (EDRISELPEDLLLQILSDIPTENVIATSVLSKRWRSLWKMVPNLTFDFT). 6 LRR repeats span residues 74–100 (HQTF…QLNF), 152–179 (ILEI…RLYE), 180–205 (VHFK…SVHR), 218–252 (VPSL…NIVG), 272–297 (ISDV…SLES), and 320–345 (KERE…KLTG). Positions 357 to 408 (NWNPPKCVPECLLFHLEKFLWTGYEWQRGDEKEVATYILENARLLKKATFST) constitute an FBD domain.

The protein is Putative F-box/FBD/LRR-repeat protein At3g49030 of Arabidopsis thaliana (Mouse-ear cress).